The primary structure comprises 629 residues: tRNA uridine 5-carboxymethylaminomethyl modification enzyme MnmG (629 aa).

Residues 13–18, valine 125, and serine 180 contribute to the FAD site; that span reads GGGHAG. 273–287 is an NAD(+) binding site; it reads GPRYCPSIEDKVMRF. FAD is bound at residue glutamine 370.

This sequence belongs to the MnmG family. As to quaternary structure, homodimer. Heterotetramer of two MnmE and two MnmG subunits. It depends on FAD as a cofactor.

The protein localises to the cytoplasm. In terms of biological role, NAD-binding protein involved in the addition of a carboxymethylaminomethyl (cmnm) group at the wobble position (U34) of certain tRNAs, forming tRNA-cmnm(5)s(2)U34. The chain is tRNA uridine 5-carboxymethylaminomethyl modification enzyme MnmG from Serratia proteamaculans (strain 568).